The chain runs to 369 residues: GTPase Obg (369 aa).

In terms of domain architecture, Obg spans 1–159 (MKFIDEAKIE…RELRLELKVL (159 aa)). Residues 128–148 (IHFKSSTNRAPRQKSEGKEGE) are disordered. Residues 160-333 (ADIGLLGMPN…LVTEIYDYIA (174 aa)) enclose the OBG-type G domain. GTP-binding positions include 166–173 (GMPNAGKS), 191–195 (FTTLH), 213–216 (DIPG), 283–286 (NKLD), and 314–316 (SAL). Positions 173 and 193 each coordinate Mg(2+).

It belongs to the TRAFAC class OBG-HflX-like GTPase superfamily. OBG GTPase family. As to quaternary structure, monomer. Mg(2+) serves as cofactor.

It localises to the cytoplasm. Functionally, an essential GTPase which binds GTP, GDP and possibly (p)ppGpp with moderate affinity, with high nucleotide exchange rates and a fairly low GTP hydrolysis rate. Plays a role in control of the cell cycle, stress response, ribosome biogenesis and in those bacteria that undergo differentiation, in morphogenesis control. This Herminiimonas arsenicoxydans protein is GTPase Obg.